The primary structure comprises 535 residues: Glutamate--cysteine ligase (535 aa).

Belongs to the glutamate--cysteine ligase type 1 family. Type 1 subfamily.

It carries out the reaction L-cysteine + L-glutamate + ATP = gamma-L-glutamyl-L-cysteine + ADP + phosphate + H(+). Its pathway is sulfur metabolism; glutathione biosynthesis; glutathione from L-cysteine and L-glutamate: step 1/2. The chain is Glutamate--cysteine ligase from Pseudomonas syringae pv. syringae (strain B728a).